The primary structure comprises 162 residues: MAELIIVYFSSKSNNTHRFVQKLGLPAQRIPVDNRPLEVSTHYLLIVPTYAAGGSDAKGAVPKQVIRFLNNPNNRKHCKGVISSGNTNFGDTFALAGPIISRKLQVPLLHQFELLGTATDVKKVQAIFARLKHHTHDKQKQTNNLITERTHPCHKPMRHTSH.

The protein belongs to the NrdI family.

Functionally, probably involved in ribonucleotide reductase function. The protein is Protein NrdI of Streptococcus pyogenes serotype M2 (strain MGAS10270).